Consider the following 353-residue polypeptide: Photosystem II D2 protein (353 aa).

Position 2 is an N-acetylthreonine (Thr-2). Phosphothreonine is present on Thr-2. The helical transmembrane segment at 41–61 threads the bilayer; the sequence is CAYFSLGGWFTGTTFVTSWYT. His-118 provides a ligand contact to chlorophyll a. Residues 125 to 141 traverse the membrane as a helical segment; the sequence is GFMLRQFELARSVQLRP. Pheophytin a contacts are provided by Gln-130 and Asn-143. The chain crosses the membrane as a helical span at residues 153-166; that stretch reads VFVSVFLIYPLGQS. Residue His-198 participates in chlorophyll a binding. The chain crosses the membrane as a helical span at residues 208-228; that stretch reads AALLCAIHGATVENTLFEDGD. A plastoquinone-binding residues include His-215 and Phe-262. His-215 serves as a coordination point for Fe cation. His-269 provides a ligand contact to Fe cation. Residues 279–295 traverse the membrane as a helical segment; the sequence is GLWMSAIGVVGLALNLR.

It belongs to the reaction center PufL/M/PsbA/D family. In terms of assembly, PSII is composed of 1 copy each of membrane proteins PsbA, PsbB, PsbC, PsbD, PsbE, PsbF, PsbH, PsbI, PsbJ, PsbK, PsbL, PsbM, PsbT, PsbX, PsbY, PsbZ, Psb30/Ycf12, at least 3 peripheral proteins of the oxygen-evolving complex and a large number of cofactors. It forms dimeric complexes. The D1/D2 heterodimer binds P680, chlorophylls that are the primary electron donor of PSII, and subsequent electron acceptors. It shares a non-heme iron and each subunit binds pheophytin, quinone, additional chlorophylls, carotenoids and lipids. There is also a Cl(-1) ion associated with D1 and D2, which is required for oxygen evolution. The PSII complex binds additional chlorophylls, carotenoids and specific lipids. serves as cofactor.

It localises to the plastid. Its subcellular location is the chloroplast thylakoid membrane. It catalyses the reaction 2 a plastoquinone + 4 hnu + 2 H2O = 2 a plastoquinol + O2. Photosystem II (PSII) is a light-driven water:plastoquinone oxidoreductase that uses light energy to abstract electrons from H(2)O, generating O(2) and a proton gradient subsequently used for ATP formation. It consists of a core antenna complex that captures photons, and an electron transfer chain that converts photonic excitation into a charge separation. The D1/D2 (PsbA/PsbD) reaction center heterodimer binds P680, the primary electron donor of PSII as well as several subsequent electron acceptors. D2 is needed for assembly of a stable PSII complex. In Physcomitrium patens (Spreading-leaved earth moss), this protein is Photosystem II D2 protein.